The chain runs to 207 residues: Small ribosomal subunit protein uS4 (207 aa).

Residues 31–55 (KCKLDSKPGQHGRTSGARTSDYGTQ) are disordered. Over residues 42–53 (GRTSGARTSDYG) the composition is skewed to polar residues. The S4 RNA-binding domain occupies 97 to 160 (SRLDNVVYRM…KKQARIVEAL (64 aa)).

It belongs to the universal ribosomal protein uS4 family. Part of the 30S ribosomal subunit. Contacts protein S5. The interaction surface between S4 and S5 is involved in control of translational fidelity.

In terms of biological role, one of the primary rRNA binding proteins, it binds directly to 16S rRNA where it nucleates assembly of the body of the 30S subunit. Its function is as follows. With S5 and S12 plays an important role in translational accuracy. This Burkholderia ambifaria (strain MC40-6) protein is Small ribosomal subunit protein uS4.